Reading from the N-terminus, the 69-residue chain is Sec-independent protein translocase protein TatA (69 aa).

The chain crosses the membrane as a helical span at residues 1-21; it reads MGSLSIWHWLIVLAIALLLFG. The tract at residues 41-69 is disordered; it reads KGMNDDEETPPPAQSTTSRTVEHKADESK. Positions 60 to 69 are enriched in basic and acidic residues; sequence TVEHKADESK.

The protein belongs to the TatA/E family. In terms of assembly, the Tat system comprises two distinct complexes: a TatABC complex, containing multiple copies of TatA, TatB and TatC subunits, and a separate TatA complex, containing only TatA subunits. Substrates initially bind to the TatABC complex, which probably triggers association of the separate TatA complex to form the active translocon.

The protein resides in the cell inner membrane. Functionally, part of the twin-arginine translocation (Tat) system that transports large folded proteins containing a characteristic twin-arginine motif in their signal peptide across membranes. TatA could form the protein-conducting channel of the Tat system. In Rhizobium rhizogenes (strain K84 / ATCC BAA-868) (Agrobacterium radiobacter), this protein is Sec-independent protein translocase protein TatA.